Reading from the N-terminus, the 286-residue chain is 4-hydroxybenzoate octaprenyltransferase (286 aa).

The next 7 membrane-spanning stretches (helical) occupy residues 20-40, 43-63, 96-116, 142-162, 167-187, 210-230, and 234-254; these read IGTL…AGGM, LKVL…GCII, LFVV…PLVV, FLGV…TGTV, WWLF…YAMV, QVIA…GWAA, and LVYA…QKLI.

Belongs to the UbiA prenyltransferase family. Requires Mg(2+) as cofactor.

The protein resides in the cell inner membrane. It catalyses the reaction all-trans-octaprenyl diphosphate + 4-hydroxybenzoate = 4-hydroxy-3-(all-trans-octaprenyl)benzoate + diphosphate. The protein operates within cofactor biosynthesis; ubiquinone biosynthesis. Its function is as follows. Catalyzes the prenylation of para-hydroxybenzoate (PHB) with an all-trans polyprenyl group. Mediates the second step in the final reaction sequence of ubiquinone-8 (UQ-8) biosynthesis, which is the condensation of the polyisoprenoid side chain with PHB, generating the first membrane-bound Q intermediate 3-octaprenyl-4-hydroxybenzoate. This Shewanella woodyi (strain ATCC 51908 / MS32) protein is 4-hydroxybenzoate octaprenyltransferase.